The chain runs to 254 residues: Ankyrin repeat domain-containing protein 7 (254 aa).

ANK repeat units lie at residues 58 to 87 (KYRT…KINV), 91 to 120 (ENKS…DPDL), 124 to 153 (RYNT…DLEA), 157 to 186 (DGYT…DVNA), and 190 to 219 (YQRT…ELCY).

Testis specific.

The sequence is that of Ankyrin repeat domain-containing protein 7 (ANKRD7) from Homo sapiens (Human).